The sequence spans 228 residues: 7-cyano-7-deazaguanine synthase (228 aa).

Residue 8 to 18 participates in ATP binding; sequence LSGGMDSATTL. Residues C188, C198, C201, and C204 each contribute to the Zn(2+) site.

Belongs to the QueC family. Zn(2+) serves as cofactor.

The enzyme catalyses 7-carboxy-7-deazaguanine + NH4(+) + ATP = 7-cyano-7-deazaguanine + ADP + phosphate + H2O + H(+). The protein operates within purine metabolism; 7-cyano-7-deazaguanine biosynthesis. Catalyzes the ATP-dependent conversion of 7-carboxy-7-deazaguanine (CDG) to 7-cyano-7-deazaguanine (preQ(0)). This is 7-cyano-7-deazaguanine synthase from Nitrosomonas europaea (strain ATCC 19718 / CIP 103999 / KCTC 2705 / NBRC 14298).